The primary structure comprises 312 residues: Protoheme IX farnesyltransferase (312 aa).

The next 9 membrane-spanning stretches (helical) occupy residues 29–49, 50–70, 90–110, 117–137, 150–170, 177–197, 223–243, 246–266, and 292–312; these read VMSLVVFTGLVGLVLAPGHMN, PVLAVISILCIAVGAGASGAL, IPAGIIAPNQVLAFGLTLSAF, LMVNWLAAALLAFTIFFYAVI, IVIGGAAGAFPPMIGWAAATG, LVLFMIIFLWTPPHFWALSLF, ALFYAVLMAPVGVLPWVMGFA, FYGVVSTLLGLAFVYYAWRLW, and IFAVLLFEALTFKLLAAFGVF.

It belongs to the UbiA prenyltransferase family. Protoheme IX farnesyltransferase subfamily.

It is found in the cell inner membrane. It carries out the reaction heme b + (2E,6E)-farnesyl diphosphate + H2O = Fe(II)-heme o + diphosphate. It functions in the pathway porphyrin-containing compound metabolism; heme O biosynthesis; heme O from protoheme: step 1/1. Converts heme B (protoheme IX) to heme O by substitution of the vinyl group on carbon 2 of heme B porphyrin ring with a hydroxyethyl farnesyl side group. This chain is Protoheme IX farnesyltransferase, found in Brucella melitensis biotype 1 (strain ATCC 23456 / CCUG 17765 / NCTC 10094 / 16M).